A 67-amino-acid polypeptide reads, in one-letter code: MIVPIRCWTCGRPLGHLWEPFRNRVLAGEDPGKVLDDLHVTRYCCRRTLLAHVELINQVLPYGLIEK.

The Zn(2+) site is built by Cys7, Cys10, Cys44, and Cys45.

This sequence belongs to the archaeal Rpo10/eukaryotic RPB10 RNA polymerase subunit family. As to quaternary structure, part of the RNA polymerase complex. Requires Zn(2+) as cofactor.

It is found in the cytoplasm. The catalysed reaction is RNA(n) + a ribonucleoside 5'-triphosphate = RNA(n+1) + diphosphate. Its function is as follows. DNA-dependent RNA polymerase (RNAP) catalyzes the transcription of DNA into RNA using the four ribonucleoside triphosphates as substrates. This chain is DNA-directed RNA polymerase subunit Rpo10, found in Caldivirga maquilingensis (strain ATCC 700844 / DSM 13496 / JCM 10307 / IC-167).